A 123-amino-acid polypeptide reads, in one-letter code: Chaperone protein SycN (123 aa).

Interacts with YscB to form a complex which specifically binds to YopN.

The protein resides in the cytoplasm. The protein localises to the cell inner membrane. Functionally, functions as a specific chaperone for YopN. It could facilitate the secretion and the subsequent translocation of YopN. The sequence is that of Chaperone protein SycN (sycN) from Yersinia enterocolitica.